A 181-amino-acid polypeptide reads, in one-letter code: Translation initiation factor IF-3 (181 aa).

It belongs to the IF-3 family. As to quaternary structure, monomer.

The protein resides in the cytoplasm. Functionally, IF-3 binds to the 30S ribosomal subunit and shifts the equilibrium between 70S ribosomes and their 50S and 30S subunits in favor of the free subunits, thus enhancing the availability of 30S subunits on which protein synthesis initiation begins. The chain is Translation initiation factor IF-3 from Azotobacter vinelandii.